The primary structure comprises 256 residues: Thiazole synthase (256 aa).

Lys-98 acts as the Schiff-base intermediate with DXP in catalysis. 1-deoxy-D-xylulose 5-phosphate-binding positions include Gly-159, 185–186 (AG), and 207–208 (NT).

The protein belongs to the ThiG family. Homotetramer. Forms heterodimers with either ThiH or ThiS.

It localises to the cytoplasm. The enzyme catalyses [ThiS sulfur-carrier protein]-C-terminal-Gly-aminoethanethioate + 2-iminoacetate + 1-deoxy-D-xylulose 5-phosphate = [ThiS sulfur-carrier protein]-C-terminal Gly-Gly + 2-[(2R,5Z)-2-carboxy-4-methylthiazol-5(2H)-ylidene]ethyl phosphate + 2 H2O + H(+). It functions in the pathway cofactor biosynthesis; thiamine diphosphate biosynthesis. Its function is as follows. Catalyzes the rearrangement of 1-deoxy-D-xylulose 5-phosphate (DXP) to produce the thiazole phosphate moiety of thiamine. Sulfur is provided by the thiocarboxylate moiety of the carrier protein ThiS. In vitro, sulfur can be provided by H(2)S. This chain is Thiazole synthase, found in Aliivibrio salmonicida (strain LFI1238) (Vibrio salmonicida (strain LFI1238)).